A 526-amino-acid chain; its full sequence is Cytochrome P450 monooxygenase ucsK (526 aa).

A helical transmembrane segment spans residues 7 to 27; it reads PVLAAATAVSFGFYLAGLFVY. N-linked (GlcNAc...) asparagine glycosylation is present at Asn403. Cys467 serves as a coordination point for heme.

Belongs to the cytochrome P450 family. Heme is required as a cofactor.

The protein localises to the membrane. It participates in mycotoxin biosynthesis. Its function is as follows. Cytochrome P450 monooxygenase; part of the gene cluster that mediates the biosynthesis of UCS1025A, a member of the pyrrolizidinone family that acts as a strong telomerase inhibitor and displays potent antibacterial and antitumor properties. These compounds share a hemiaminal-containing pyrrolizidinone core fused with a gamma-lactone, giving a furopyrrolizidine that is connected to a decalin fragment. The polyketide synthase module (PKS) of the PKS-NRPS ucsA is responsible for the synthesis of the polyketide backbone via the condensation of an acetyl-CoA starter unit with 6 malonyl-CoA units. The downstream nonribosomal peptide synthetase (NRPS) module then amidates the carboxyl end of the polyketide with a 2S,3S-methylproline derived from L-isoleucine by the 2-oxoglutarate-dependent dioxygenase ucsF which converts L-isoleucine to (4S,5S)-4-methylpyrroline-5-carboxylate that is further converted to 2S,3S-methylproline by the pyrroline-5-carboxylate reductase ucsG. Reductive release of the completed aminoacyl polyketide from the assembly line can form the 3-pyrrolin-2-one structure via an intramolecular Knoevenagel reaction. Because ucsA lacks a designated enoylreductase (ER) domain, the required activity is provided the enoyl reductase ucsL. This keto acyclic precursor is the substrate of the Diels-Alderase ucsH, that catalyzes the Diels-Alder cycloaddition. Oxidation of the 3S-methyl group to a carboxylate by the cytochrome P450 monooxygenase ucsK allows an oxa-Michael cyclization that might involve the reductase/dehydrogenase ucsI and which furnishes the furopyrrolizidine. The oxidase ucsJ likely plays a critical role in stereoselective reduction of the C5-C6 double bond to afford the required R-configured carboxylate group. Further enolization and oxidation at C5 by an unidentified enzyme affords the last intermediate that can undergo oxa-Michael cyclization to yield UCS1025A. This Acremonium sp protein is Cytochrome P450 monooxygenase ucsK.